The primary structure comprises 607 residues: Threonine--tRNA ligase (607 aa).

The tract at residues 1 to 143 is editing domain; it reads MRVLYIHAER…SFKPEEARVA (143 aa). Catalytic regions lie at residues 193-489 and 194-489; these read PRYL…PRLP and RYLD…PRLP. Positions 286, 337, and 458 each coordinate Zn(2+).

Belongs to the class-II aminoacyl-tRNA synthetase family. In terms of assembly, homodimer. Zn(2+) serves as cofactor.

Its subcellular location is the cytoplasm. It carries out the reaction tRNA(Thr) + L-threonine + ATP = L-threonyl-tRNA(Thr) + AMP + diphosphate + H(+). Catalyzes the attachment of threonine to tRNA(Thr) in a two-step reaction: L-threonine is first activated by ATP to form Thr-AMP and then transferred to the acceptor end of tRNA(Thr). Also edits incorrectly charged L-seryl-tRNA(Thr). The sequence is that of Threonine--tRNA ligase from Pyrobaculum calidifontis (strain DSM 21063 / JCM 11548 / VA1).